The sequence spans 203 residues: GTP cyclohydrolase 1 (203 aa).

The Zn(2+) site is built by Cys87, His90, and Cys158.

The protein belongs to the GTP cyclohydrolase I family. As to quaternary structure, homomer.

The enzyme catalyses GTP + H2O = 7,8-dihydroneopterin 3'-triphosphate + formate + H(+). Its pathway is cofactor biosynthesis; 7,8-dihydroneopterin triphosphate biosynthesis; 7,8-dihydroneopterin triphosphate from GTP: step 1/1. This chain is GTP cyclohydrolase 1, found in Xylella fastidiosa (strain M23).